Consider the following 200-residue polypeptide: Probable molybdenum cofactor guanylyltransferase (200 aa).

GTP is bound by residues 9 to 11, K21, D69, and D100; that span reads LAG. Residue D100 coordinates Mg(2+).

This sequence belongs to the MobA family. The cofactor is Mg(2+).

It localises to the cytoplasm. The enzyme catalyses Mo-molybdopterin + GTP + H(+) = Mo-molybdopterin guanine dinucleotide + diphosphate. Transfers a GMP moiety from GTP to Mo-molybdopterin (Mo-MPT) cofactor (Moco or molybdenum cofactor) to form Mo-molybdopterin guanine dinucleotide (Mo-MGD) cofactor. The chain is Probable molybdenum cofactor guanylyltransferase from Bacillus cereus (strain ZK / E33L).